We begin with the raw amino-acid sequence, 402 residues long: CinA-like protein (402 aa).

Belongs to the CinA family.

In Fusobacterium nucleatum subsp. nucleatum (strain ATCC 25586 / DSM 15643 / BCRC 10681 / CIP 101130 / JCM 8532 / KCTC 2640 / LMG 13131 / VPI 4355), this protein is CinA-like protein.